The following is a 155-amino-acid chain: Phytohormone-binding protein CSBP (155 aa).

Residues Leu22, Gln67, Glu69, and Thr139–Tyr142 contribute to the trans-zeatin site. Gln67 lines the gibberellin A3 pocket. Thr139 provides a ligand contact to gibberellin A3.

It belongs to the BetVI family. As to quaternary structure, monomer.

Binds the cytokinin trans-zeatin in vitro. Binds gibberellin A3 (GA3) in vitro. This Vigna radiata var. radiata (Mung bean) protein is Phytohormone-binding protein CSBP.